The primary structure comprises 255 residues: Microfibril-associated glycoprotein 4 (255 aa).

The N-terminal stretch at methionine 1–proline 20 is a signal peptide. The Cell attachment site motif lies at arginine 26–aspartate 28. The 224-residue stretch at lysine 32–alanine 255 folds into the Fibrinogen C-terminal domain. N-linked (GlcNAc...) asparagine glycosylation is found at asparagine 87 and asparagine 137.

Homodimer. Can also form higher oligomers. Interacts with FBN1, FBN2 and LOX. Interacts with COL1A1 in a Ca (2+)-dependent manner. Interacts with ELN in a Ca (2+)-dependent manner; this interaction promotes ELN self-assembly.

It is found in the secreted. The protein resides in the extracellular space. The protein localises to the extracellular matrix. In terms of biological role, could be involved in calcium-dependent cell adhesion or intercellular interactions. May contribute to the elastic fiber assembly and/or maintenance. The sequence is that of Microfibril-associated glycoprotein 4 (MFAP4) from Bos taurus (Bovine).